A 45-amino-acid chain; its full sequence is uncharacterized protein (45 aa).

This is an uncharacterized protein from Archaeoglobus fulgidus (strain ATCC 49558 / DSM 4304 / JCM 9628 / NBRC 100126 / VC-16).